The primary structure comprises 372 residues: Chaperone protein DnaJ (372 aa).

The region spanning 5–70 is the J domain; that stretch reads DYYEVLGVAK…DKRAAYDQFG (66 aa). The CR-type zinc-finger motif lies at 133–211; that stretch reads GTETKIRIPT…CHGEGRVKKH (79 aa). Residues Cys146, Cys149, Cys163, Cys166, Cys185, Cys188, Cys199, and Cys202 each contribute to the Zn(2+) site. CXXCXGXG motif repeat units follow at residues 146–153, 163–170, 185–192, and 199–206; these read CGTCHGSG, CSACGGHG, CPRCGGTG, and CPSCHGEG.

It belongs to the DnaJ family. As to quaternary structure, homodimer. Zn(2+) is required as a cofactor.

The protein resides in the cytoplasm. In terms of biological role, participates actively in the response to hyperosmotic and heat shock by preventing the aggregation of stress-denatured proteins and by disaggregating proteins, also in an autonomous, DnaK-independent fashion. Unfolded proteins bind initially to DnaJ; upon interaction with the DnaJ-bound protein, DnaK hydrolyzes its bound ATP, resulting in the formation of a stable complex. GrpE releases ADP from DnaK; ATP binding to DnaK triggers the release of the substrate protein, thus completing the reaction cycle. Several rounds of ATP-dependent interactions between DnaJ, DnaK and GrpE are required for fully efficient folding. Also involved, together with DnaK and GrpE, in the DNA replication of plasmids through activation of initiation proteins. In Thiobacillus denitrificans (strain ATCC 25259 / T1), this protein is Chaperone protein DnaJ.